Reading from the N-terminus, the 88-residue chain is Small ribosomal subunit protein uS17 (88 aa).

It belongs to the universal ribosomal protein uS17 family. Part of the 30S ribosomal subunit.

Its function is as follows. One of the primary rRNA binding proteins, it binds specifically to the 5'-end of 16S ribosomal RNA. In Xylella fastidiosa (strain M23), this protein is Small ribosomal subunit protein uS17.